The primary structure comprises 63 residues: Sec-independent protein translocase protein TatA (63 aa).

Residues 1–21 (MGSFSMWHWLIVLVIVLLLFG) form a helical membrane-spanning segment. The interval 42–63 (GMTDDDAPDTAKTVDHKADETK) is disordered. Positions 53–63 (KTVDHKADETK) are enriched in basic and acidic residues.

The protein belongs to the TatA/E family. In terms of assembly, the Tat system comprises two distinct complexes: a TatABC complex, containing multiple copies of TatA, TatB and TatC subunits, and a separate TatA complex, containing only TatA subunits. Substrates initially bind to the TatABC complex, which probably triggers association of the separate TatA complex to form the active translocon.

The protein localises to the cell inner membrane. Functionally, part of the twin-arginine translocation (Tat) system that transports large folded proteins containing a characteristic twin-arginine motif in their signal peptide across membranes. TatA could form the protein-conducting channel of the Tat system. The chain is Sec-independent protein translocase protein TatA from Rhizobium etli (strain CIAT 652).